The following is a 64-amino-acid chain: Large ribosomal subunit protein bL32 (64 aa).

The interval 1–35 is disordered; it reads MAVQKSRVTPSRRGQRRSHDALTAKQLSTDPTSGE.

The protein belongs to the bacterial ribosomal protein bL32 family.

The polypeptide is Large ribosomal subunit protein bL32 (Xanthomonas axonopodis pv. citri (strain 306)).